A 597-amino-acid chain; its full sequence is Gamma-terpinene synthase, chloroplastic (597 aa).

The N-terminal 47 residues, 1–47, are a transit peptide targeting the chloroplast; it reads MATLSMQVSILSKQVKNLNSFGMRASKLPMVARRVDVSTTRLRPICS. D350 and D354 together coordinate Mn(2+). The DDXXD motif motif lies at 350 to 354; sequence DDVYD. Homodimerization stretches follow at residues 356–362 and 428–464; these read YGTLDEL and EAKWYYAGYTPTLAEYLENAKVSISSPTIISQVYFTL. Mn(2+) is bound by residues D494 and E502.

The protein belongs to the terpene synthase family. As to quaternary structure, homodimer. The cofactor is Mn(2+). Mg(2+) is required as a cofactor.

The protein resides in the plastid. It is found in the chloroplast. It catalyses the reaction (2E)-geranyl diphosphate = gamma-terpinene + diphosphate. The protein operates within secondary metabolite biosynthesis; terpenoid biosynthesis. Its function is as follows. Involved in the biosynthesis of phenolic monoterpenes natural products thymol and carvacrol which have a broad range of biological activities acting as antimicrobial compounds, insecticides, antioxidants and pharmaceutical agents. Monoterpene synthase which catalyzes the conversion of geranyl diphosphate (GPP) to gamma-terpinene. The chain is Gamma-terpinene synthase, chloroplastic from Thymus caespititius (Cretan thyme).